The following is a 202-amino-acid chain: Imidazoleglycerol-phosphate dehydratase (202 aa).

The protein belongs to the imidazoleglycerol-phosphate dehydratase family.

It localises to the cytoplasm. The enzyme catalyses D-erythro-1-(imidazol-4-yl)glycerol 3-phosphate = 3-(imidazol-4-yl)-2-oxopropyl phosphate + H2O. It participates in amino-acid biosynthesis; L-histidine biosynthesis; L-histidine from 5-phospho-alpha-D-ribose 1-diphosphate: step 6/9. The protein is Imidazoleglycerol-phosphate dehydratase of Clavibacter michiganensis subsp. michiganensis (strain NCPPB 382).